A 260-amino-acid chain; its full sequence is Putative [LysW]-aminoadipate/[LysW]-glutamate kinase (260 aa).

Substrate-binding positions include 35–36, Arg62, and Asn162; that span reads GG.

The protein belongs to the acetylglutamate kinase family. LysZ subfamily.

Its subcellular location is the cytoplasm. The enzyme catalyses [amino-group carrier protein]-C-terminal-N-(1,4-dicarboxybutan-1-yl)-L-glutamine + ATP = [amino-group carrier protein]-C-terminal-N-(1-carboxy-5-phosphooxy-5-oxopentan-1-yl)-L-glutamine + ADP. It catalyses the reaction [amino-group carrier protein]-C-terminal-gamma-(L-glutamyl)-L-glutamate + ATP = [amino-group carrier protein]-C-terminal-gamma-(5-phospho-L-glutamyl)-L-glutamate + ADP. It functions in the pathway amino-acid biosynthesis; L-lysine biosynthesis via AAA pathway; L-lysine from L-alpha-aminoadipate (Thermus route): step 2/5. The protein operates within amino-acid biosynthesis; L-arginine biosynthesis. Functionally, involved in both the arginine and lysine biosynthetic pathways. Phosphorylates the LysW-bound precursors glutamate (for arginine biosynthesis), respectively alpha-aminoadipate (for lysine biosynthesis). The sequence is that of Putative [LysW]-aminoadipate/[LysW]-glutamate kinase from Pyrobaculum neutrophilum (strain DSM 2338 / JCM 9278 / NBRC 100436 / V24Sta) (Thermoproteus neutrophilus).